The chain runs to 269 residues: Achromobactin transport ATP-binding protein CbrD (269 aa).

One can recognise an ABC transporter domain in the interval 4–240 (ITSRELTLGY…ALVKTVFNLD (237 aa)). Residue 36-43 (GSNGCGKS) coordinates ATP.

It belongs to the ABC transporter superfamily.

The protein resides in the cell inner membrane. Its function is as follows. Part of the binding-protein-dependent transport system CbrABCD for uptake of the siderophore achromobactin. Probably responsible for energy coupling to the transport system. In Dickeya dadantii (strain 3937) (Erwinia chrysanthemi (strain 3937)), this protein is Achromobactin transport ATP-binding protein CbrD (cbrD).